Here is a 150-residue protein sequence, read N- to C-terminus: Avidin-related protein 2 (150 aa).

The first 24 residues, 1–24 (MVHATSPLLLLLLLSLALVAPSLS), serve as a signal peptide directing secretion. The region spanning 26 to 147 (RKCSLTGEWD…GNNDFTRQHT (122 aa)) is the Avidin-like domain. Cysteines 28 and 105 form a disulfide. The biotin site is built by Asn-36, Ser-40, Tyr-57, Thr-59, and Asp-63. Residues Asn-67 and Asn-93 are each glycosylated (N-linked (GlcNAc...) asparagine). Biotin-binding residues include Ser-95, Ser-99, and Asn-140.

As to quaternary structure, homotetramer. Post-translationally, glycosylated.

It is found in the secreted. In terms of biological role, forms a strong non-covalent specific complex with biotin. This chain is Avidin-related protein 2 (AVR2), found in Gallus gallus (Chicken).